Reading from the N-terminus, the 350-residue chain is Ion-translocating oxidoreductase complex subunit D (350 aa).

Transmembrane regions (helical) follow at residues 20 to 39, 89 to 109, and 123 to 143; these read IMML…WYFF, IPPL…VIIA, and PAMI…TNWL. Thr-187 is modified (FMN phosphoryl threonine). 5 helical membrane-spanning segments follow: residues 215 to 235, 244 to 264, 267 to 287, 301 to 321, and 322 to 342; these read LAGL…LFLL, IPVS…LIAP, FLSP…FFIL, LVFG…GGYP, and DGVA…DYYT.

This sequence belongs to the NqrB/RnfD family. In terms of assembly, the complex is composed of six subunits: RnfA, RnfB, RnfC, RnfD, RnfE and RnfG. It depends on FMN as a cofactor.

It is found in the cell inner membrane. Part of a membrane-bound complex that couples electron transfer with translocation of ions across the membrane. This chain is Ion-translocating oxidoreductase complex subunit D, found in Cronobacter sakazakii (strain ATCC BAA-894) (Enterobacter sakazakii).